Here is a 217-residue protein sequence, read N- to C-terminus: Transmembrane protein 253 (217 aa).

4 consecutive transmembrane segments (helical) span residues 33-53 (LVLA…AVSV), 62-82 (MATA…TVTL), 96-116 (MMIF…VEVM), and 138-158 (LSAE…LFLL). The interval 187–217 (PGLENGPTVASTGANERVGQREQTRAALLPP) is disordered.

It is found in the membrane. In Homo sapiens (Human), this protein is Transmembrane protein 253 (TMEM253).